Here is a 265-residue protein sequence, read N- to C-terminus: Early E4 31 kDa protein (265 aa).

The protein belongs to the adenoviridae E4 30 to 34 kDa protein family. In terms of assembly, interacts with E1B-55k.

Its subcellular location is the host nucleus. The protein resides in the host cytoplasm. Functionally, plays a major role to prevent cellular inhibition of viral genome replication by nuclear bodies. Assembles an SCF-like E3 ubiquitin ligase complex based on the cellular proteins ELOB, ELOC, CUL5 and RBX1, in cooperation with viral E1B-55K. This viral RING-type ligase ubiquitinates cellular substrates prior to proteasomal degradation: p53/TP53, LIG4, MRE11-RAD50-NBS1 (MRN) complex, ITGA3, DAXX and BLM. In Canis lupus familiaris (Dog), this protein is Early E4 31 kDa protein.